A 665-amino-acid polypeptide reads, in one-letter code: Fermitin family homolog 3 (665 aa).

Tyrosine 11 bears the Phosphotyrosine mark. Positions 229–556 (WLDSSRCLMQ…SLPDFGISYV (328 aa)) constitute an FERM domain. In terms of domain architecture, PH spans 354–453 (DHLRIFRPRK…WMAGCRLASK (100 aa)). At tyrosine 502 the chain carries Phosphotyrosine. Threonine 589 carries the post-translational modification Phosphothreonine.

This sequence belongs to the kindlin family. Interacts with ITGB1, ITGB2 and ITGB3 (via cytoplasmic tails).

The protein localises to the cell projection. It localises to the podosome. Its function is as follows. Plays a central role in cell adhesion in hematopoietic cells. Acts by activating the integrin beta-1-3 (ITGB1, ITGB2 and ITGB3). Required for integrin-mediated platelet adhesion and leukocyte adhesion to endothelial cells. Required for activation of integrin beta-2 (ITGB2) in polymorphonuclear granulocytes (PMNs). This chain is Fermitin family homolog 3 (FERMT3), found in Bos taurus (Bovine).